Consider the following 1755-residue polypeptide: Transposon Ty1-ER2 Gag-Pol polyprotein (1755 aa).

Polar residues-rich tracts occupy residues 1–10 (MESQQLSNYP), 48–60 (TKAN…TPAS), and 127–152 (QSQF…GNTF). Disordered regions lie at residues 1-93 (MESQ…MMTQ), 126-173 (PQSQ…RPPP), and 352-421 (GSRN…SKST). The span at 153 to 165 (TDSSSADSDMTST) shows a compositional bias: low complexity. The tract at residues 299–401 (NNGIHINNKV…NSKSKTARAH (103 aa)) is RNA-binding. Residues 402-418 (NVSTSNNSPSTDNDSIS) are compositionally biased toward low complexity. Asp-461 (for protease activity; shared with dimeric partner) is an active-site residue. Residues 583-640 (NVHTSESTRKYPYPFIHRMLAHANAQTIRYSLKNNTITYFNESDVDWSSAIDYQCPDC) are integrase-type zinc finger-like. The 176-residue stretch at 660–835 (NSYEPFQYLH…AGLDISTLLP (176 aa)) folds into the Integrase catalytic domain. Residues Asp-671 and Asp-736 each coordinate Mg(2+). Residues 958 to 1170 (AVSPTDSTPP…SSLGGIGDSN (213 aa)) are disordered. Positions 960 to 969 (SPTDSTPPST) are enriched in low complexity. Residues 1005 to 1015 (STPQISDIEST) are compositionally biased toward polar residues. The segment covering 1038–1053 (ESSHASKSKDFRHSDS) has biased composition (basic and acidic residues). Composition is skewed to polar residues over residues 1054 to 1082 (YSDN…QTSE) and 1095 to 1106 (SIDTSSSESNSL). A Bipartite nuclear localization signal motif is present at residues 1178 to 1212 (KKRSLEDNETEIKVSRDTWNTKNMRSLEPPRSKKR). In terms of domain architecture, Reverse transcriptase Ty1/copia-type spans 1338–1476 (NNYYITQLDI…DILGLEIKYQ (139 aa)). Mg(2+) is bound by residues Asp-1346, Asp-1427, Asp-1428, Asp-1610, Glu-1652, and Asp-1685. The region spanning 1610-1752 (DASYGNQPYY…IKTFKLLTNK (143 aa)) is the RNase H Ty1/copia-type domain.

As to quaternary structure, the capsid protein forms a homotrimer, from which the VLPs are assembled. The protease is a homodimer, whose active site consists of two apposed aspartic acid residues. Initially, virus-like particles (VLPs) are composed of the structural unprocessed proteins Gag and Gag-Pol, and also contain the host initiator methionine tRNA (tRNA(i)-Met) which serves as a primer for minus-strand DNA synthesis, and a dimer of genomic Ty RNA. Processing of the polyproteins occurs within the particle and proceeds by an ordered pathway, called maturation. First, the protease (PR) is released by autocatalytic cleavage of the Gag-Pol polyprotein yielding capsid protein p45 and a Pol-p154 precursor protein. This cleavage is a prerequisite for subsequent processing of Pol-p154 at the remaining sites to release the mature structural and catalytic proteins. Maturation takes place prior to the RT reaction and is required to produce transposition-competent VLPs.

It localises to the cytoplasm. Its subcellular location is the nucleus. It carries out the reaction DNA(n) + a 2'-deoxyribonucleoside 5'-triphosphate = DNA(n+1) + diphosphate. It catalyses the reaction Endonucleolytic cleavage to 5'-phosphomonoester.. Its function is as follows. Capsid protein (CA) is the structural component of the virus-like particle (VLP), forming the shell that encapsulates the retrotransposons dimeric RNA genome. The particles are assembled from trimer-clustered units and there are holes in the capsid shells that allow for the diffusion of macromolecules. CA also has nucleocapsid-like chaperone activity, promoting primer tRNA(i)-Met annealing to the multipartite primer-binding site (PBS), dimerization of Ty1 RNA and initiation of reverse transcription. The aspartyl protease (PR) mediates the proteolytic cleavages of the Gag and Gag-Pol polyproteins after assembly of the VLP. In terms of biological role, reverse transcriptase/ribonuclease H (RT) is a multifunctional enzyme that catalyzes the conversion of the retro-elements RNA genome into dsDNA within the VLP. The enzyme displays a DNA polymerase activity that can copy either DNA or RNA templates, and a ribonuclease H (RNase H) activity that cleaves the RNA strand of RNA-DNA heteroduplexes during plus-strand synthesis and hydrolyzes RNA primers. The conversion leads to a linear dsDNA copy of the retrotransposon that includes long terminal repeats (LTRs) at both ends. Functionally, integrase (IN) targets the VLP to the nucleus, where a subparticle preintegration complex (PIC) containing at least integrase and the newly synthesized dsDNA copy of the retrotransposon must transit the nuclear membrane. Once in the nucleus, integrase performs the integration of the dsDNA into the host genome. The chain is Transposon Ty1-ER2 Gag-Pol polyprotein (TY1B-ER2) from Saccharomyces cerevisiae (strain ATCC 204508 / S288c) (Baker's yeast).